The sequence spans 384 residues: MTKRRVVVGMSGGVDSSVTAWLLKEQGYDVVGLFMKNWEDDDDGEYCSTRQDWIDVVSVADLIGIDVEAVNFAAEYKDRVFAEFLREYSAGRTPNPDVLCNAEIKFKAFLDHAMSLDAEMIATGHYARVRERDGRFELLKAFDHTKDQSYFLHRLNQAQLSKTMFPLGEIPKTKVREIAAQIGLPNAKKKDSTGICFIGERPFRDFLNRYLPTKPGPMKTPDGKVIGEHIGLAFYTFGQRKGIGLGGSKDGSGEPWFVAAKDIASNTLYVVQGHDHPWLLSRQLVAGNVSWVAGEPPADGFSCGAKTRYRQADAACSFGRADGERFSLAFDDAQWAVTPGQSAVLYDGEICLGGGIIEFAATGQPGQTAPAPAAGHTGALAEAR.

ATP is bound by residues 9–16 (GMSGGVDS) and methionine 35. The interval 95–97 (NPD) is interaction with target base in tRNA. Cysteine 100 functions as the Nucleophile in the catalytic mechanism. A disulfide bond links cysteine 100 and cysteine 196. Glycine 124 contributes to the ATP binding site. An interaction with tRNA region spans residues 146 to 148 (KDQ). Cysteine 196 acts as the Cysteine persulfide intermediate in catalysis. Positions 308 to 309 (RY) are interaction with tRNA.

It belongs to the MnmA/TRMU family.

Its subcellular location is the cytoplasm. The catalysed reaction is S-sulfanyl-L-cysteinyl-[protein] + uridine(34) in tRNA + AH2 + ATP = 2-thiouridine(34) in tRNA + L-cysteinyl-[protein] + A + AMP + diphosphate + H(+). Its function is as follows. Catalyzes the 2-thiolation of uridine at the wobble position (U34) of tRNA, leading to the formation of s(2)U34. The protein is tRNA-specific 2-thiouridylase MnmA of Burkholderia ambifaria (strain ATCC BAA-244 / DSM 16087 / CCUG 44356 / LMG 19182 / AMMD) (Burkholderia cepacia (strain AMMD)).